The primary structure comprises 105 residues: Small ribosomal subunit protein uS10 (105 aa).

It belongs to the universal ribosomal protein uS10 family. As to quaternary structure, part of the 30S ribosomal subunit.

In terms of biological role, involved in the binding of tRNA to the ribosomes. This Desulfotalea psychrophila (strain LSv54 / DSM 12343) protein is Small ribosomal subunit protein uS10.